The following is a 221-amino-acid chain: Interleukin-12 subunit alpha (221 aa).

A signal peptide spans 1–25 (MCPLRSLLLISTLVLLHHLPHLSLG). 3 disulfides stabilise this stretch: Cys39-Cys112, Cys66-Cys198, and Cys87-Cys125. N-linked (GlcNAc...) asparagine glycosylation occurs at Asn95.

This sequence belongs to the IL-6 superfamily. Heterodimer with IL12B; disulfide-linked. This heterodimer is known as interleukin IL-12. Heterodimer with EBI3/IL27B; not disulfide-linked. This heterodimer is known as interleukin IL-35. Interacts with NBR1; this interaction promotes IL-12 secretion.

It is found in the secreted. Functionally, heterodimerizes with IL12B to form the IL-12 cytokine or with EBI3/IL27B to form the IL-35 cytokine. IL-12 is primarily produced by professional antigen-presenting cells (APCs) such as B-cells and dendritic cells (DCs) as well as macrophages and granulocytes and regulates T-cell and natural killer-cell responses, induces the production of interferon-gamma (IFN-gamma), favors the differentiation of T-helper 1 (Th1) cells and is an important link between innate resistance and adaptive immunity. Mechanistically, exerts its biological effects through a receptor composed of IL12R1 and IL12R2 subunits. Binding to the receptor results in the rapid tyrosine phosphorylation of a number of cellular substrates including the JAK family kinases TYK2 and JAK2. In turn, recruited STAT4 gets phosphorylated and translocates to the nucleus where it regulates cytokine/growth factor responsive genes. As part of IL-35, plays essential roles in maintaining the immune homeostasis of the liver microenvironment and also functions as an immune-suppressive cytokine. Mediates biological events through unconventional receptors composed of IL12RB2 and gp130/IL6ST heterodimers or homodimers. Signaling requires the transcription factors STAT1 and STAT4, which form a unique heterodimer that binds to distinct DNA sites. The chain is Interleukin-12 subunit alpha (IL12A) from Bubalus carabanensis (Swamp type water buffalo).